The sequence spans 571 residues: Urease subunit alpha (571 aa).

In terms of domain architecture, Urease spans 131 to 571; the sequence is GGIDAHIHFI…LPMAQRYFLF (441 aa). Histidine 136, histidine 138, and lysine 219 together coordinate Ni(2+). Position 219 is an N6-carboxylysine (lysine 219). A substrate-binding site is contributed by histidine 221. Histidine 248 and histidine 274 together coordinate Ni(2+). Histidine 322 functions as the Proton donor in the catalytic mechanism. Aspartate 362 contacts Ni(2+).

This sequence belongs to the metallo-dependent hydrolases superfamily. Urease alpha subunit family. In terms of assembly, heterotrimer of UreA (gamma), UreB (beta) and UreC (alpha) subunits. Three heterotrimers associate to form the active enzyme. It depends on Ni cation as a cofactor. Carboxylation allows a single lysine to coordinate two nickel ions.

The protein resides in the cytoplasm. It carries out the reaction urea + 2 H2O + H(+) = hydrogencarbonate + 2 NH4(+). The protein operates within nitrogen metabolism; urea degradation; CO(2) and NH(3) from urea (urease route): step 1/1. This is Urease subunit alpha from Nostoc punctiforme (strain ATCC 29133 / PCC 73102).